A 247-amino-acid chain; its full sequence is 5'-nucleotidase SurE (247 aa).

Aspartate 8, aspartate 9, serine 39, and asparagine 91 together coordinate a divalent metal cation.

The protein belongs to the SurE nucleotidase family. A divalent metal cation is required as a cofactor.

Its subcellular location is the cytoplasm. The catalysed reaction is a ribonucleoside 5'-phosphate + H2O = a ribonucleoside + phosphate. Functionally, nucleotidase that shows phosphatase activity on nucleoside 5'-monophosphates. This is 5'-nucleotidase SurE from Leptospira biflexa serovar Patoc (strain Patoc 1 / Ames).